A 1157-amino-acid polypeptide reads, in one-letter code: Myosin tail region-interacting protein MTI1 (1157 aa).

One can recognise an SH3 domain in the interval 5–69 (EVPFKVVAQF…PKSFVAVQGS (65 aa)). Disordered stretches follow at residues 68 to 116 (GSEV…GPVP) and 135 to 156 (TAVS…KVPM). Polar residues predominate over residues 77-89 (SSPNTGSTEQRTI). Over residues 93–110 (VEQKDLPEPISPETKKET) the composition is skewed to basic and acidic residues. A Phosphoserine modification is found at Ser103. The segment covering 138–149 (SAQVQHDSSSGN) has biased composition (polar residues). Ser158 and Ser166 each carry phosphoserine. Disordered stretches follow at residues 231–256 (PEPI…KDLP) and 284–888 (KKAK…PKVA). Coiled coils occupy residues 234-301 (INRA…NKNE) and 356-430 (EKEQ…GASR). Composition is skewed to basic and acidic residues over residues 242–256 (GRIE…KDLP), 284–296 (KKAK…ERSA), and 312–383 (NEKT…RGEN). Residues 398-411 (EGDNDEEKEEEDSE) are compositionally biased toward acidic residues. 2 stretches are compositionally biased toward basic and acidic residues: residues 412 to 423 (ENRRAALRERMA) and 506 to 524 (KTLD…EHGT). A compositionally biased stretch (acidic residues) spans 544–558 (DSDEDTDDHEFEDAN). Phosphoserine is present on Ser565. Residues 574 to 585 (GNNESENVNSGE) show a composition bias toward low complexity. A compositionally biased stretch (basic and acidic residues) spans 597–606 (RTAEVSHDIE). Residues 607–641 (NSSQNTTGNVLPVSSPQTRVARNGSINSLTKSISG) show a composition bias toward polar residues. A phosphoserine mark is found at Ser621, Ser631, and Ser634. Position 636 is a phosphothreonine (Thr636). Residues Ser638 and Ser647 each carry the phosphoserine modification. Residues 642–653 (ENRRKSINEYHD) are compositionally biased toward basic and acidic residues. A compositionally biased stretch (polar residues) spans 654-668 (TVSTNSSALTETAQD). Composition is skewed to pro residues over residues 691–738 (PHPV…PVSS) and 747–765 (SIPP…PAPL). The segment covering 769-778 (KHNEVEEHVK) has biased composition (basic and acidic residues). Over residues 795-808 (NTAPPLPRAPPVPP) the composition is skewed to pro residues. Residues 832 to 853 (QNVTASTPSMMSTQQRVPTSVL) are compositionally biased toward polar residues. A Phosphothreonine modification is found at Thr850. Residue Ser889 is modified to Phosphoserine. 2 positions are modified to phosphothreonine: Thr894 and Thr895. Residue Lys1012 forms a Glycyl lysine isopeptide (Lys-Gly) (interchain with G-Cter in ubiquitin) linkage.

As to quaternary structure, binds to the SH3 domains of the type I myosins MYO3 and MYO5.

The protein resides in the cytoplasm. It is found in the cytoskeleton. The protein localises to the actin patch. Functionally, involved in the regulation of actin cytoskeleton. In Saccharomyces cerevisiae (strain ATCC 204508 / S288c) (Baker's yeast), this protein is Myosin tail region-interacting protein MTI1 (BBC1).